We begin with the raw amino-acid sequence, 317 residues long: UAP56-interacting factor (317 aa).

Position 1 is an N-acetylmethionine (M1). The tract at residues 1 to 26 is disordered; sequence MNRFGTRLVGATATPPPPPKARSNEN. T14 is modified (phosphothreonine). S23 carries the phosphoserine modification. Residues 26–44 carry the UAP56-binding motif motif; that stretch reads NLDKIDMSLDDIIKLNRKE. 2 positions are modified to phosphoserine: S60 and S117. K139 participates in a covalent cross-link: Glycyl lysine isopeptide (Lys-Gly) (interchain with G-Cter in SUMO1). K260 is covalently cross-linked (Glycyl lysine isopeptide (Lys-Gly) (interchain with G-Cter in SUMO2)).

The protein belongs to the UIF family. As to quaternary structure, interacts with DDX39B/UAP56 and NXF1; interaction with DDX39B/UAP56 and NXF1 are mutually exclusive. Interacts with SSRP1; required for its recruitment to mRNAs. Interacts with CHTOP.

The protein resides in the nucleus. Its subcellular location is the nucleoplasm. It localises to the nucleus speckle. Functionally, required for mRNA export from the nucleus to the cytoplasm. Acts as an adapter that uses the DDX39B/UAP56-NFX1 pathway to ensure efficient mRNA export and delivering to the nuclear pore. Associates with spliced and unspliced mRNAs simultaneously with ALYREF/THOC4. In Mus musculus (Mouse), this protein is UAP56-interacting factor (Fyttd1).